We begin with the raw amino-acid sequence, 284 residues long: Mevalonate kinase (284 aa).

An ATP-binding site is contributed by 86–96 (PIGSGLGSSAA). The active-site Proton acceptor is Asp137.

Belongs to the GHMP kinase family. Mevalonate kinase subfamily. Homodimer. Mg(2+) is required as a cofactor.

Its subcellular location is the cytoplasm. It catalyses the reaction (R)-mevalonate + ATP = (R)-5-phosphomevalonate + ADP + H(+). It participates in isoprenoid biosynthesis; isopentenyl diphosphate biosynthesis via mevalonate pathway; isopentenyl diphosphate from (R)-mevalonate: step 1/3. Functionally, catalyzes the phosphorylation of (R)-mevalonate (MVA) to (R)-mevalonate 5-phosphate (MVAP). Functions in the mevalonate (MVA) pathway leading to isopentenyl diphosphate (IPP), a key precursor for the biosynthesis of isoprenoid compounds such as archaeal membrane lipids. The chain is Mevalonate kinase from Archaeoglobus fulgidus (strain ATCC 49558 / DSM 4304 / JCM 9628 / NBRC 100126 / VC-16).